The chain runs to 489 residues: Rhamnulokinase (489 aa).

Residue 13 to 17 (ASSGR) coordinates ATP. Residues cysteine 68 and cysteine 222 are joined by a disulfide bond. Substrate contacts are provided by residues glycine 83 and 236 to 238 (HDT). The active-site Proton acceptor is aspartate 237. Threonine 259 contacts ATP. Residue asparagine 296 coordinates substrate. Glutamine 304 lines the ATP pocket. An intrachain disulfide couples cysteine 353 to cysteine 370. Position 402 (glycine 402) interacts with ATP. Cysteine 413 and cysteine 417 are oxidised to a cystine.

It belongs to the rhamnulokinase family. Mg(2+) serves as cofactor.

It carries out the reaction L-rhamnulose + ATP = L-rhamnulose 1-phosphate + ADP + H(+). The protein operates within carbohydrate degradation; L-rhamnose degradation; glycerone phosphate from L-rhamnose: step 2/3. Functionally, involved in the catabolism of L-rhamnose (6-deoxy-L-mannose). Catalyzes the transfer of the gamma-phosphate group from ATP to the 1-hydroxyl group of L-rhamnulose to yield L-rhamnulose 1-phosphate. The polypeptide is Rhamnulokinase (Salmonella agona (strain SL483)).